The following is a 128-amino-acid chain: Large-conductance mechanosensitive channel (128 aa).

Transmembrane regions (helical) follow at residues Phe-11–Gly-31 and Gly-70–Val-90.

It belongs to the MscL family. As to quaternary structure, homopentamer.

It is found in the cell membrane. Its function is as follows. Channel that opens in response to stretch forces in the membrane lipid bilayer. May participate in the regulation of osmotic pressure changes within the cell. The polypeptide is Large-conductance mechanosensitive channel (Listeria monocytogenes serotype 4a (strain HCC23)).